The chain runs to 317 residues: Serpentine receptor class delta-44 (317 aa).

The next 6 membrane-spanning stretches (helical) occupy residues 5 to 25 (ILSV…IILI), 90 to 110 (MFHI…LTTF), 130 to 150 (ILFI…LVII), 185 to 205 (RVNG…CLLL), 235 to 255 (IFGH…SLIT), and 264 to 284 (FFIF…TMYF).

This sequence belongs to the nematode receptor-like protein srd family.

It is found in the membrane. This chain is Serpentine receptor class delta-44 (srd-44), found in Caenorhabditis elegans.